A 396-amino-acid polypeptide reads, in one-letter code: Argininosuccinate synthase (396 aa).

ATP-binding positions include Ala10–Ser18 and Ala37. Residues Tyr88 and Ser93 each coordinate L-citrulline. Gly118 is a binding site for ATP. 3 residues coordinate L-aspartate: Thr120, Asn124, and Asp125. Asn124 provides a ligand contact to L-citrulline. L-citrulline-binding residues include Arg128, Ser176, Ser185, Glu261, and Tyr273.

This sequence belongs to the argininosuccinate synthase family. Type 1 subfamily. Homotetramer.

Its subcellular location is the cytoplasm. It carries out the reaction L-citrulline + L-aspartate + ATP = 2-(N(omega)-L-arginino)succinate + AMP + diphosphate + H(+). It participates in amino-acid biosynthesis; L-arginine biosynthesis; L-arginine from L-ornithine and carbamoyl phosphate: step 2/3. This chain is Argininosuccinate synthase, found in Nitratidesulfovibrio vulgaris (strain ATCC 29579 / DSM 644 / CCUG 34227 / NCIMB 8303 / VKM B-1760 / Hildenborough) (Desulfovibrio vulgaris).